Here is a 772-residue protein sequence, read N- to C-terminus: DNA ligase (772 aa).

NAD(+) is bound by residues 80 to 84 (DAEYD), 130 to 131 (SL), and glutamate 160. The N6-AMP-lysine intermediate role is filled by lysine 162. Arginine 183, glutamate 220, lysine 336, and lysine 360 together coordinate NAD(+). 4 residues coordinate Zn(2+): cysteine 454, cysteine 457, cysteine 473, and cysteine 479. In terms of domain architecture, BRCT spans 685–772 (APEQTLEGLT…NGPQGITTIG (88 aa)).

Belongs to the NAD-dependent DNA ligase family. LigA subfamily. Mg(2+) is required as a cofactor. The cofactor is Mn(2+).

The catalysed reaction is NAD(+) + (deoxyribonucleotide)n-3'-hydroxyl + 5'-phospho-(deoxyribonucleotide)m = (deoxyribonucleotide)n+m + AMP + beta-nicotinamide D-nucleotide.. DNA ligase that catalyzes the formation of phosphodiester linkages between 5'-phosphoryl and 3'-hydroxyl groups in double-stranded DNA using NAD as a coenzyme and as the energy source for the reaction. It is essential for DNA replication and repair of damaged DNA. This is DNA ligase from Cutibacterium acnes (strain DSM 16379 / KPA171202) (Propionibacterium acnes).